Consider the following 72-residue polypeptide: UPF0729 protein C18orf32 homolog (72 aa).

Residues 1 to 33 (MVCIPCIVIPVLLWIFKKFLEPYIYPVVSRIWP) are necessary for its localzation to the endoplasmic reticulum and lipid droplets. A disordered region spans residues 45–72 (TGKVDCKGADTNGFSTKGPTEVSDKKKD).

It belongs to the UPF0729 family. As to quaternary structure, interacts with DERL1 and AMFR. Post-translationally, undergoes ER-associated degradation (ERAD).

Its subcellular location is the endoplasmic reticulum. It localises to the lipid droplet. Functionally, may activate the NF-kappa-B signaling pathway. The protein is UPF0729 protein C18orf32 homolog of Rattus norvegicus (Rat).